We begin with the raw amino-acid sequence, 170 residues long: CASP-like protein 2D1 (170 aa).

Residues 1–4 are Cytoplasmic-facing; sequence MLKL. Residues 5-25 form a helical membrane-spanning segment; that stretch reads LDFSLRLSVIPLSVATIWLTV. The Extracellular segment spans residues 26–47; it reads TNKQDNSIYGYLKYSDLTGLKY. A helical transmembrane segment spans residues 48 to 68; sequence MVFISGICASYAFIAAVSTWI. At 69-83 the chain is on the cytoplasmic side; the sequence is RCIVTKTWLFFVSDQ. Residues 84 to 104 traverse the membrane as a helical segment; that stretch reads IVAYLMVTSGTAVLEILYLAY. The Extracellular portion of the chain corresponds to 105–127; it reads NGDREVSWSEACTSYGKFCYRMK. Residues 128–148 traverse the membrane as a helical segment; it reads LAVILHALALSCFIILAVISA. The Cytoplasmic portion of the chain corresponds to 149 to 170; that stretch reads YRAFSIFEPPLVPSKVVEEDRA.

It belongs to the Casparian strip membrane proteins (CASP) family. In terms of assembly, homodimer and heterodimers.

The protein resides in the cell membrane. The chain is CASP-like protein 2D1 from Populus trichocarpa (Western balsam poplar).